The chain runs to 550 residues: Metal transporter Nramp4 (550 aa).

Residues 1-13 are compositionally biased toward basic and acidic residues; it reads MEEGAKIGREHEQ. Residues 1–37 form a disordered region; that stretch reads MEEGAKIGREHEQQQQQHGRVNGSGRVAAVGGGSGGG. Residues 14–29 are compositionally biased toward low complexity; the sequence is QQQQHGRVNGSGRVAA. Helical transmembrane passes span 72-92, 105-125, 151-171, 177-197, 207-227, 255-275, 292-312, 354-374, 388-408, 416-436, 457-477, and 492-512; these read FLAH…PSNL, SLLW…SLAA, LWLL…LGTA, LLHI…FLIL, MEFT…MELG, VAMF…SLVL, FFLL…VAIV, VYGV…SYAG, IIYL…CSIG, IINI…IPLI, IAWI…CTSF, and AIIS…LIYL.

This sequence belongs to the NRAMP (TC 2.A.55) family.

It localises to the membrane. Its function is as follows. Probable metal transporter. The chain is Metal transporter Nramp4 (NRAMP4) from Oryza sativa subsp. japonica (Rice).